The chain runs to 782 residues: Zinc finger protein 786 (782 aa).

The region spanning 9 to 80 (LTFEDVAIYF…WRESQKSGNI (72 aa)) is the KRAB domain. Positions 141-164 (PQRHDARAPPPLACGPSESTLKEG) are disordered. The C2H2-type 1; degenerate zinc finger occupies 192 to 209 (CGESCWENNHLVMHQRGH). The segment at 240-262 (FRCGVCGKSFRRKLCLLRHLAAH) adopts a C2H2-type 2 zinc-finger fold. The disordered stretch occupies residues 285 to 364 (SHRLPQQGEK…EGDTEALQHG (80 aa)). A C2H2-type 3; degenerate zinc finger spans residues 369 to 391 (CSCSECGERSPMSARLASPCRAH). C2H2-type zinc fingers lie at residues 397–419 (FQCAHCTKRFRLRRLLQVHQHAH), 425–447 (FSCRKCGKGFAKQCKLTEHIRVH), and 453–475 (FRCAKCGRNFRQRGQLLRHQRLH). Residues 481–503 (FQCPECGLSFRLESMLRAHRLRH) form a C2H2-type 7; degenerate zinc finger. C2H2-type zinc fingers lie at residues 509-531 (FSCSECGRGFTHQCKLREHLRVH), 537-559 (FQCLKCDKRFRLKGILKAHQHTH), 565-587 (FSCGECGKGFTRQSKLTEHLRVH), 593-615 (FQCPECNRSFRLKGQLLSHQRLH), 621-643 (FQCPECDKRYRVKADMKAHQLLH), 649-670 (FSCECGKGFVKHSKLIEHIRTH), 676-698 (FQCPKCDKSFRLKAQLLSHQGLH), 704-726 (FHCPECDKNFRERGHMLRHQRIH), and 732-754 (FACGDCGKGFIYKSKLAEHIRVH).

This sequence belongs to the krueppel C2H2-type zinc-finger protein family.

The protein resides in the nucleus. May be involved in transcriptional regulation. This is Zinc finger protein 786 (ZNF786) from Homo sapiens (Human).